The chain runs to 706 residues: MPGERRRFAQATKSVGVSWPAKVRRRDGTLVPFDIARIEAAVTRAAREVACDDPDMPGTVAKAVADALGRGIAPVEDIQDCVEARLGEAGLDDVARVYIIYRQRRAELRTAKALLGVRDELKLSLAAVTVLRERYLLHDEQGRPAESTGELMDRSARCVAAAEDQYEPGSSRRWAERFATLLRNLEFLPNSPTLMNSGTDLGLLAGCFVLPIEDSLQSIFATLGQAAELQRAGGGTGYAFSHLRPAGDRVASTGGTASGPVSFLRLYDSAAGVVSMGGRRRGACMAVLDVSHPDICDFVTAKAESPSELPHFNLSVGVTDAFLRAVERNGLHRLVNPRTGKIVARMPAAELFDAICKAAHAGGDPGLVFLDTINRANPVPGRGRIEATNPCGEVPLLPYESCNLGSINLARMLADGRVDWDRLEEVAGVAVRFLDDVIDVSRYPFPELGEAARATRKIGLGVMGLAELLAALGIPYDSEEAVRLATRLMRRIQQAAHTASRRLAEERGAFPAFTDSRFARSGPRRNAQVTSVAPTGTISLIAGTTAGIEPMFAIAFTRAIVGRHLLEVNPCFDRLARDRGFYRDELIAEIAQRGGVRGYPRLPAEVRAAFPTAAEIAPQWHLRMQAAVQRHVEAAVSKTVNLPATATVDDVRAIYVAAWKAKVKGITVYRYGSREGQVLSYAAPKPLLAQADTEFSGGCAGRSCEF.

The ATP-cone domain maps to 21 to 109 (AKVRRRDGTL…IYRQRRAELR (89 aa)). Residues serine 191, 206–207 (GC), glycine 235, 389–393 (NPCGE), and 534–538 (PTGTI) each bind substrate. Cysteine 207 and cysteine 402 form a disulfide bridge. Asparagine 389 acts as the Proton acceptor in catalysis. Residue cysteine 391 is the Cysteine radical intermediate of the active site. The active-site Proton acceptor is the glutamate 393.

Belongs to the ribonucleoside diphosphate reductase class-2 family. Adenosylcob(III)alamin is required as a cofactor.

It carries out the reaction a 2'-deoxyribonucleoside 5'-diphosphate + [thioredoxin]-disulfide + H2O = a ribonucleoside 5'-diphosphate + [thioredoxin]-dithiol. Provides the precursors necessary for DNA synthesis. Catalyzes the biosynthesis of deoxyribonucleotides from the corresponding ribonucleotides. The polypeptide is Vitamin B12-dependent ribonucleoside-diphosphate reductase (nrdZ) (Mycobacterium tuberculosis (strain ATCC 25618 / H37Rv)).